Consider the following 223-residue polypeptide: Cutinase (223 aa).

A signal peptide spans 1 to 19 (MKFFAFSMLIGEASPIVLA). A disulfide bridge connects residues Cys46 and Cys124. Ser135 functions as the Nucleophile in the catalytic mechanism. Cys185 and Cys192 are joined by a disulfide. Asp189 is an active-site residue. The active-site Proton donor/acceptor is the His202.

It belongs to the cutinase family. In terms of processing, the 2 disulfide bonds play a critical role in holding the catalytic residues in juxta-position; reduction of the disulfide bridges results in the complete inactivation of the enzyme.

It is found in the secreted. It catalyses the reaction cutin + H2O = cutin monomers.. In terms of biological role, catalyzes the hydrolysis of complex carboxylic polyesters found in the cell wall of plants. Degrades cutin, a macromolecule that forms the structure of the plant cuticle. Allows pathogenic fungi to penetrate through the cuticular barrier into the host plant during the initial stage of fungal infection. This chain is Cutinase (CUT), found in Didymella rabiei (Chickpea ascochyta blight fungus).